The following is a 176-amino-acid chain: Ribosome maturation factor RimM (176 aa).

The region spanning 93–172 is the PRC barrel domain; that stretch reads EGEFFYFDVL…EILTKDAKSI (80 aa).

It belongs to the RimM family. Binds ribosomal protein uS19.

The protein resides in the cytoplasm. Its function is as follows. An accessory protein needed during the final step in the assembly of 30S ribosomal subunit, possibly for assembly of the head region. Essential for efficient processing of 16S rRNA. May be needed both before and after RbfA during the maturation of 16S rRNA. It has affinity for free ribosomal 30S subunits but not for 70S ribosomes. The chain is Ribosome maturation factor RimM from Campylobacter curvus (strain 525.92).